A 169-amino-acid chain; its full sequence is Ribosome maturation factor RimM (169 aa).

The PRC barrel domain maps to 94–167 (ENEFYFHEII…KITIEVMEGL (74 aa)).

It belongs to the RimM family. Binds ribosomal protein uS19.

It is found in the cytoplasm. In terms of biological role, an accessory protein needed during the final step in the assembly of 30S ribosomal subunit, possibly for assembly of the head region. Essential for efficient processing of 16S rRNA. May be needed both before and after RbfA during the maturation of 16S rRNA. It has affinity for free ribosomal 30S subunits but not for 70S ribosomes. The chain is Ribosome maturation factor RimM from Listeria monocytogenes serotype 4b (strain F2365).